The sequence spans 124 residues: MDTMGRHVISELWGCDFDKLNDIDFIEKTFVDAALKSGAEIREVAFHKFAPQGVSGVVIISESHLTIHTFPEHGYASIDVYTCGHLDPTIAADYIAEMLGAQTRETIELPRGMRPIEVKKAQAL.

Catalysis depends on serine 63, which acts as the Schiff-base intermediate with substrate; via pyruvic acid. Pyruvic acid (Ser); by autocatalysis is present on serine 63. Residue histidine 68 is the Proton acceptor; for processing activity of the active site. The active-site Proton donor; for catalytic activity is the cysteine 83.

Belongs to the prokaryotic AdoMetDC family. Type 1 subfamily. Heterotetramer of two alpha and two beta chains arranged as a dimer of alpha/beta heterodimers. It depends on pyruvate as a cofactor. Is synthesized initially as an inactive proenzyme. Formation of the active enzyme involves a self-maturation process in which the active site pyruvoyl group is generated from an internal serine residue via an autocatalytic post-translational modification. Two non-identical subunits are generated from the proenzyme in this reaction, and the pyruvate is formed at the N-terminus of the alpha chain, which is derived from the carboxyl end of the proenzyme. The post-translation cleavage follows an unusual pathway, termed non-hydrolytic serinolysis, in which the side chain hydroxyl group of the serine supplies its oxygen atom to form the C-terminus of the beta chain, while the remainder of the serine residue undergoes an oxidative deamination to produce ammonia and the pyruvoyl group blocking the N-terminus of the alpha chain.

It catalyses the reaction S-adenosyl-L-methionine + H(+) = S-adenosyl 3-(methylsulfanyl)propylamine + CO2. The protein operates within amine and polyamine biosynthesis; S-adenosylmethioninamine biosynthesis; S-adenosylmethioninamine from S-adenosyl-L-methionine: step 1/1. In terms of biological role, catalyzes the decarboxylation of S-adenosylmethionine to S-adenosylmethioninamine (dcAdoMet), the propylamine donor required for the synthesis of the polyamines spermine and spermidine from the diamine putrescine. The chain is S-adenosylmethionine decarboxylase proenzyme from Geobacillus kaustophilus (strain HTA426).